We begin with the raw amino-acid sequence, 457 residues long: Glycerol-3-phosphate acyltransferase 3 (457 aa).

The helical transmembrane segment at 14 to 34 threads the bilayer; it reads WLTLVGSLILLPSAFGLSLGI. A phosphoserine mark is found at Ser-68 and Ser-77. 2 helical membrane passes run 137 to 157 and 161 to 181; these read ISPK…CFLL and VTLA…VGQL. The short motif at 229 to 234 is the HXXXXD motif element; it reads HTSPID. Residues 429–457 are disordered; sequence GNGSPSLALDSSTVDNHGSPEPAFRSESL. The segment covering 431–444 has biased composition (polar residues); that stretch reads GSPSLALDSSTVDN.

It belongs to the 1-acyl-sn-glycerol-3-phosphate acyltransferase family.

It localises to the endoplasmic reticulum membrane. The catalysed reaction is sn-glycerol 3-phosphate + an acyl-CoA = a 1-acyl-sn-glycero-3-phosphate + CoA. The enzyme catalyses a 1-acyl-sn-glycero-3-phosphate + an acyl-CoA = a 1,2-diacyl-sn-glycero-3-phosphate + CoA. It carries out the reaction dodecanoyl-CoA + sn-glycerol 3-phosphate = 1-dodecanoyl-sn-glycerol 3-phosphate + CoA. It catalyses the reaction sn-glycerol 3-phosphate + hexadecanoyl-CoA = 1-hexadecanoyl-sn-glycero-3-phosphate + CoA. The catalysed reaction is sn-glycerol 3-phosphate + (9Z)-octadecenoyl-CoA = 1-(9Z-octadecenoyl)-sn-glycero-3-phosphate + CoA. The enzyme catalyses (9Z,12Z)-octadecadienoyl-CoA + sn-glycerol 3-phosphate = 1-(9Z,12Z)-octadecadienoyl-sn-glycero-3-phosphate + CoA. It carries out the reaction 1-tetradecanoyl-sn-glycerol 3-phosphate + (9Z)-octadecenoyl-CoA = 1-tetradecanoyl-2-(9Z)-octadecenoyl-sn-glycero-3-phosphate + CoA. It catalyses the reaction 1-hexadecanoyl-sn-glycero-3-phosphate + (9Z)-octadecenoyl-CoA = 1-hexadecanoyl-2-(9Z-octadecenoyl)-sn-glycero-3-phosphate + CoA. The catalysed reaction is 1-(9Z-octadecenoyl)-sn-glycero-3-phosphate + (9Z)-octadecenoyl-CoA = 1,2-di-(9Z-octadecenoyl)-sn-glycero-3-phosphate + CoA. The enzyme catalyses 1-(6Z,9Z,12Z-octadecatrienoyl)-sn-glycero-3-phosphate + (9Z)-octadecenoyl-CoA = (6Z,9Z,12Z)-octadecatrienoyl-2-(9Z)-octadecenoyl-sn-glycero-3-phosphate + CoA. It carries out the reaction 1-(9Z,12Z,15Z)-octadecatrienoyl-sn-glycero-3-phosphate + (9Z)-octadecenoyl-CoA = 1-(9Z,12Z,15Z)-octadecatrienoyl-2-(9Z)-octadecenoyl-sn-glycero-3-phosphate + CoA. It catalyses the reaction 1-(9Z-octadecenoyl)-sn-glycero-3-phosphate + tetradecanoyl-CoA = 1-(9Z)-octadecenoyl-2-tetradecanoyl-sn-glycero-3-phosphate + CoA. The catalysed reaction is 1-(9Z-octadecenoyl)-sn-glycero-3-phosphate + hexadecanoyl-CoA = 1-(9Z)-octadecenoyl-2-hexadecanoyl-sn-glycero-3-phosphate + CoA. The enzyme catalyses 1-(9Z-octadecenoyl)-sn-glycero-3-phosphate + octadecanoyl-CoA = 1-(9Z-octadecenoyl)-2-octadecanoyl-sn-glycero-3-phosphate + CoA. It carries out the reaction 1-(9Z-octadecenoyl)-sn-glycero-3-phosphate + (9Z,12Z)-octadecadienoyl-CoA = 1-(9Z)-octadecenoyl-2-(9Z,12Z)-octadecadienoyl-sn-glycero-3-phosphate + CoA. It catalyses the reaction 1-(5Z,8Z,11Z,14Z-eicosatetraenoyl)-sn-glycero-3-phosphate + (9Z)-octadecenoyl-CoA = 1-(5Z,8Z,11Z,14Z)-eicosatetraenoyl-2-(9Z)-octadecenoyl-sn-glycero-3-phosphate + CoA. It functions in the pathway glycerolipid metabolism; triacylglycerol biosynthesis. Its pathway is phospholipid metabolism; CDP-diacylglycerol biosynthesis; CDP-diacylglycerol from sn-glycerol 3-phosphate: step 1/3. Its function is as follows. Converts glycerol-3-phosphate to 1-acyl-sn-glycerol-3-phosphate (lysophosphatidic acid or LPA) by incorporating an acyl moiety at the sn-1 position of the glycerol backbone. Also converts LPA into 1,2-diacyl-sn-glycerol-3-phosphate (phosphatidic acid or PA) by incorporating an acyl moiety at the sn-2 position of the glycerol backbone. Protects cells against lipotoxicity. This is Glycerol-3-phosphate acyltransferase 3 from Rattus norvegicus (Rat).